We begin with the raw amino-acid sequence, 1094 residues long: Centrosomal protein of 128 kDa (1094 aa).

A disordered region spans residues methionine 1–threonine 29. Positions glutamate 7 to leucine 17 are enriched in basic and acidic residues. At serine 31 the chain carries Phosphoserine. Residues aspartate 115 to isoleucine 140 form a disordered region. Coiled-coil stretches lie at residues serine 190–isoleucine 827 and glutamate 879–glutamate 959. Phosphoserine is present on residues serine 249, serine 291, and serine 331. Residues alanine 319–glycine 345 form a disordered region. The segment covering histidine 328 to aspartate 342 has biased composition (polar residues). Basic and acidic residues predominate over residues aspartate 987–tyrosine 999. Residues aspartate 987–tyrosine 1018 form a disordered region. Residues serine 1000–leucine 1009 are compositionally biased toward basic residues. Serine 1061 is modified (phosphoserine). The disordered stretch occupies residues valine 1067–serine 1094.

Its subcellular location is the cytoplasm. It is found in the cytoskeleton. The protein localises to the microtubule organizing center. It localises to the centrosome. The protein resides in the centriole. Its subcellular location is the spindle pole. In Homo sapiens (Human), this protein is Centrosomal protein of 128 kDa (CEP128).